A 602-amino-acid chain; its full sequence is DEAD-box ATP-dependent RNA helicase 53 (602 aa).

Positions 33–43 (ASPLDPCRGPA) are enriched in low complexity. The segment at 33–76 (ASPLDPCRGPAAPEPPRRRAFHGSPSPLGFRSTPASWSSPEAGA) is disordered. The Q motif motif lies at 84–112 (LEVARLGISPWIVERLAARGITRLFPIQR). One can recognise a Helicase ATP-binding domain in the interval 115-288 (LDPAMQGKDM…SKYLKDPIII (174 aa)). 128–135 (ARTGTGKT) contributes to the ATP binding site. The short motif at 236–239 (DEAD) is the DEAD box element. One can recognise a Helicase C-terminal domain in the interval 317–462 (ILGPLIKEHA…LPKIEVADEA (146 aa)). A disordered region spans residues 503–602 (FGDFDGFGSS…GRSGGFDDSN (100 aa)).

It belongs to the DEAD box helicase family. DDX21/DDX50 subfamily.

The catalysed reaction is ATP + H2O = ADP + phosphate + H(+). This chain is DEAD-box ATP-dependent RNA helicase 53, found in Oryza sativa subsp. japonica (Rice).